Consider the following 453-residue polypeptide: Trypanin (453 aa).

The span at 1–10 (MPPRTAAERG) shows a compositional bias: basic and acidic residues. The segment at 1–22 (MPPRTAAERGGRRKSVKAPPPV) is disordered. Coiled coils occupy residues 60-156 (TITK…EMNV) and 185-377 (SCEA…LVEE).

This sequence belongs to the DRC4 family.

It localises to the cytoplasm. Its subcellular location is the cytoskeleton. The protein localises to the cell projection. The protein resides in the cilium. It is found in the flagellum. Its function is as follows. Cytoskeletal linker that plays a central role in the flagellum cell motility. Required for directional cell motility. Plays a role as part of a dynein regulatory system that regulates flagellar beat in response to signals from the central pair apparatus and radial spokes in procyclic cells. Also plays an essential role in the bloodstream form of the trypanosomes as its silencing is lethal for the circulating form. The chain is Trypanin from Trypanosoma brucei rhodesiense.